The sequence spans 307 residues: Furaquinocin biosynthesis prenyltransferase (307 aa).

Belongs to the aromatic prenyltransferase family. Monomer.

It catalyses the reaction 2-O,3-dimethylflaviolin + (2E)-geranyl diphosphate = 6-linalyl-2-O,3-dimethylflaviolin + diphosphate. The enzyme catalyses 2-O,3-dimethylflaviolin + (2E)-geranyl diphosphate + H(+) = 7-O-geranyl-2-O,3-dimethylflaviolin + diphosphate. With respect to regulation, does not require any metal cations for activity. Functionally, involved in the biosynthesis of furaquinocin. Catalyzes the transfer of a geranyl group to 2-methoxy-3-methyl-flaviolin to yield 6-prenyl-2-methoxy-3-methyl-flaviolin and 7-O-geranyl-2-methoxy-3-methyl-flaviolin in a 10:1 ratio. Can also use other substrates such as flaviolin or 1,3-dihydroxy naphthalene, and can also use DMAPP as prenyl donor. In Streptomyces sp. (strain KO-3988), this protein is Furaquinocin biosynthesis prenyltransferase.